The chain runs to 510 residues: NAD(P)H-quinone oxidoreductase subunit 2 A, chloroplastic (510 aa).

A run of 13 helical transmembrane segments spans residues 31–51 (FIFP…IDLT), 57–77 (TPWL…ALLF), 99–119 (IFQF…VEYI), 124–144 (MAIT…MFLC), 149–169 (LITI…LSGY), 183–203 (YLLM…WLYG), 229–249 (ISIA…PAPF), 295–315 (WHLL…LIAI), 323–343 (MLAY…IVGD), 354–374 (YMLF…LFGL), 395–415 (ALSS…AGFF), 418–438 (LYLF…IGLL), and 484–504 (MIVC…IIAI).

This sequence belongs to the complex I subunit 2 family. In terms of assembly, NDH is composed of at least 16 different subunits, 5 of which are encoded in the nucleus.

The protein localises to the plastid. Its subcellular location is the chloroplast thylakoid membrane. The catalysed reaction is a plastoquinone + NADH + (n+1) H(+)(in) = a plastoquinol + NAD(+) + n H(+)(out). It catalyses the reaction a plastoquinone + NADPH + (n+1) H(+)(in) = a plastoquinol + NADP(+) + n H(+)(out). Its function is as follows. NDH shuttles electrons from NAD(P)H:plastoquinone, via FMN and iron-sulfur (Fe-S) centers, to quinones in the photosynthetic chain and possibly in a chloroplast respiratory chain. The immediate electron acceptor for the enzyme in this species is believed to be plastoquinone. Couples the redox reaction to proton translocation, and thus conserves the redox energy in a proton gradient. In Nymphaea alba (White water-lily), this protein is NAD(P)H-quinone oxidoreductase subunit 2 A, chloroplastic.